A 615-amino-acid chain; its full sequence is Elongation factor 4 (615 aa).

Positions 14–200 (SRIRNFCIIA…KVVELIPAPS (187 aa)) constitute a tr-type G domain. GTP contacts are provided by residues 26–31 (DHGKST) and 147–150 (NKID).

The protein belongs to the TRAFAC class translation factor GTPase superfamily. Classic translation factor GTPase family. LepA subfamily.

Its subcellular location is the cell membrane. It catalyses the reaction GTP + H2O = GDP + phosphate + H(+). Required for accurate and efficient protein synthesis under certain stress conditions. May act as a fidelity factor of the translation reaction, by catalyzing a one-codon backward translocation of tRNAs on improperly translocated ribosomes. Back-translocation proceeds from a post-translocation (POST) complex to a pre-translocation (PRE) complex, thus giving elongation factor G a second chance to translocate the tRNAs correctly. Binds to ribosomes in a GTP-dependent manner. This is Elongation factor 4 from Corynebacterium efficiens (strain DSM 44549 / YS-314 / AJ 12310 / JCM 11189 / NBRC 100395).